The primary structure comprises 77 residues: U8-lycotoxin-Ls1u (77 aa).

Positions 1 to 20 are cleaved as a signal peptide; the sequence is MKLIIFTGLVLFAIVSLIEA. A propeptide spanning residues 21–26 is cleaved from the precursor; the sequence is QAENEK.

The protein belongs to the neurotoxin 19 (CSTX) family. 08 (U8-Lctx) subfamily. Contains 4 disulfide bonds. As to expression, expressed by the venom gland.

The protein localises to the secreted. In Lycosa singoriensis (Wolf spider), this protein is U8-lycotoxin-Ls1u.